A 117-amino-acid chain; its full sequence is Transcription elongation factor SPT4 (117 aa).

At A2 the chain carries N-acetylalanine. Residues 2–40 are interaction with SUPT5H; the sequence is ALETVPKDLRHLRACLLCSLVKTIDQFEYDGCDNCDAYL. Zn(2+)-binding residues include C16, C19, C33, and C36. The C4-type zinc finger occupies 16–36; the sequence is CLLCSLVKTIDQFEYDGCDNC.

Belongs to the SPT4 family. Interacts with SUPT5H to form DSIF. DSIF interacts with the positive transcription elongation factor b complex (P-TEFb complex), which is composed of CDK9 and cyclin-T (CCNT1 or CCNT2). DSIF interacts with RNA polymerase II, and this interaction is reduced by phosphorylation of the C-terminal domain (CTD) of POLR2A by P-TEFb. DSIF also interacts with the NELF complex, which is composed of NELFA, NELFB, NELFD and NELFE, and this interaction occurs following prior binding of DSIF to RNA polymerase II. DSIF also interacts with PRMT1/HRMT1L2, TATSF1, RNGTT/CAP1A, PRMT5/SKB1, SUPT6H, and can interact with PIN1. Ubiquitinated by UBR5 when not assembled in the DSIF complex, leading to its degradation: UBR5 recognizes and binds a degron that is not accessible when SUPT4H1 is part of the DSIF complex.

The protein resides in the nucleus. Its function is as follows. Component of the DRB sensitivity-inducing factor complex (DSIF complex), which regulates mRNA processing and transcription elongation by RNA polymerase II. DSIF positively regulates mRNA capping by stimulating the mRNA guanylyltransferase activity of RNGTT/CAP1A. DSIF also acts cooperatively with the negative elongation factor complex (NELF complex) to enhance transcriptional pausing at sites proximal to the promoter. Transcriptional pausing may facilitate the assembly of an elongation competent RNA polymerase II complex. DSIF and NELF promote pausing by inhibition of the transcription elongation factor TFIIS/S-II. TFIIS/S-II binds to RNA polymerase II at transcription pause sites and stimulates the weak intrinsic nuclease activity of the enzyme. Cleavage of blocked transcripts by RNA polymerase II promotes the resumption of transcription from the new 3' terminus and may allow repeated attempts at transcription through natural pause sites. This chain is Transcription elongation factor SPT4 (SUPT4H1), found in Pongo abelii (Sumatran orangutan).